The chain runs to 886 residues: Pyruvate dehydrogenase E1 component (886 aa).

As to quaternary structure, homodimer. Part of the PDH complex, consisting of multiple copies of pyruvate dehydrogenase (E1), dihydrolipoamide acetyltransferase (E2) and lipoamide dehydrogenase (E3). Thiamine diphosphate is required as a cofactor.

It carries out the reaction N(6)-[(R)-lipoyl]-L-lysyl-[protein] + pyruvate + H(+) = N(6)-[(R)-S(8)-acetyldihydrolipoyl]-L-lysyl-[protein] + CO2. Component of the pyruvate dehydrogenase (PDH) complex, that catalyzes the overall conversion of pyruvate to acetyl-CoA and CO(2). This chain is Pyruvate dehydrogenase E1 component (aceE), found in Haemophilus influenzae (strain ATCC 51907 / DSM 11121 / KW20 / Rd).